Consider the following 201-residue polypeptide: Glutathione peroxidase 1 (201 aa).

A Phosphoserine modification is found at Ser32. Sec47 is a catalytic residue. A non-standard amino acid (selenocysteine) is located at residue Sec47. 3 positions are modified to N6-acetyllysine; alternate: Lys86, Lys112, and Lys146. Residues Lys86, Lys112, and Lys146 each carry the N6-succinyllysine; alternate modification. Phosphoserine occurs at positions 195 and 199.

This sequence belongs to the glutathione peroxidase family. Homotetramer. Interacts with MIEN1. During periods of oxidative stress, Sec-47 may react with a superoxide radical, irreversibly lose hydroselenide and be converted to dehydroalanine.

The protein resides in the cytoplasm. The protein localises to the mitochondrion. The catalysed reaction is 2 glutathione + H2O2 = glutathione disulfide + 2 H2O. It carries out the reaction a hydroperoxy polyunsaturated fatty acid + 2 glutathione = a hydroxy polyunsaturated fatty acid + glutathione disulfide + H2O. It catalyses the reaction tert-butyl hydroperoxide + 2 glutathione = tert-butanol + glutathione disulfide + H2O. The enzyme catalyses cumene hydroperoxide + 2 glutathione = 2-phenylpropan-2-ol + glutathione disulfide + H2O. The catalysed reaction is (13S)-hydroperoxy-(9Z,11E)-octadecadienoate + 2 glutathione = (13S)-hydroxy-(9Z,11E)-octadecadienoate + glutathione disulfide + H2O. It carries out the reaction (9S)-hydroperoxy-(10E,12Z)-octadecadienoate + 2 glutathione = (9S)-hydroxy-(10E,12Z)-octadecadienoate + glutathione disulfide + H2O. It catalyses the reaction (5S)-hydroperoxy-(6E,8Z,11Z,14Z)-eicosatetraenoate + 2 glutathione = (5S)-hydroxy-(6E,8Z,11Z,14Z)-eicosatetraenoate + glutathione disulfide + H2O. The enzyme catalyses (12S)-hydroperoxy-(5Z,8Z,10E,14Z)-eicosatetraenoate + 2 glutathione = (12S)-hydroxy-(5Z,8Z,10E,14Z)-eicosatetraenoate + glutathione disulfide + H2O. The catalysed reaction is (12R)-hydroperoxy-(5Z,8Z,10E,14Z)-eicosatetraenoate + 2 glutathione = (12R)-hydroxy-(5Z,8Z,10E,14Z)-eicosatetraenoate + glutathione disulfide + H2O. It carries out the reaction (15S)-hydroperoxy-(5Z,8Z,11Z,13E)-eicosatetraenoate + 2 glutathione = (15S)-hydroxy-(5Z,8Z,11Z,13E)-eicosatetraenoate + glutathione disulfide + H2O. It catalyses the reaction (5S)-hydroperoxy-(6E,8Z,11Z,14Z,17Z)-eicosapentaenoate + 2 glutathione = (5S)-hydroxy-(6E,8Z,11Z,14Z,17Z)-eicosapentaenoate + glutathione disulfide + H2O. The enzyme catalyses (12S)-hydroperoxy-(5Z,8Z,10E,14Z,17Z)-eicosapentaenoate + 2 glutathione = (12S)-hydroxy-(5Z,8Z,10E,14Z,17Z)-eicosapentaenoate + glutathione disulfide + H2O. The catalysed reaction is (15S)-hydroperoxy-(5Z,8Z,11Z,13E,17Z)-eicosapentaenoate + 2 glutathione = (15S)-hydroxy-(5Z,8Z,11Z,13E,17Z)-eicosapentaenoate + glutathione disulfide + H2O. It carries out the reaction (15S)-hydroperoxy-(11Z,13E)-eicosadienoate + 2 glutathione = (15S)-hydroxy-(11Z,13E)-eicosadienoate + glutathione disulfide + H2O. It catalyses the reaction (17S)-hydroperoxy-(4Z,7Z,10Z,13Z,15E,19Z)-docosahexaenoate + 2 glutathione = (17S)-hydroxy-(4Z,7Z,10Z,13Z,15E,19Z)-docosahexaenoate + glutathione disulfide + H2O. Its function is as follows. Catalyzes the reduction of hydroperoxides in a glutathione-dependent manner thus regulating cellular redox homeostasis. Can reduce small soluble hydroperoxides such as H2O2, cumene hydroperoxide and tert-butyl hydroperoxide, as well as several fatty acid-derived hydroperoxides. In platelets catalyzes the reduction of 12-hydroperoxyeicosatetraenoic acid, the primary product of the arachidonate 12-lipoxygenase pathway. In Pan troglodytes (Chimpanzee), this protein is Glutathione peroxidase 1 (GPX1).